We begin with the raw amino-acid sequence, 300 residues long: Protease HtpX (300 aa).

2 consecutive transmembrane segments (helical) span residues 4–24 and 40–60; these read ILLF…TLRL and SLLI…LFIS. Histidine 145 serves as a coordination point for Zn(2+). Glutamate 146 is a catalytic residue. Position 149 (histidine 149) interacts with Zn(2+). 2 consecutive transmembrane segments (helical) span residues 153–173 and 193–213; these read GDMV…MFFA and LGFF…GLVA. Glutamate 225 is a binding site for Zn(2+).

This sequence belongs to the peptidase M48B family. Zn(2+) serves as cofactor.

The protein localises to the cell inner membrane. This is Protease HtpX from Chromohalobacter salexigens (strain ATCC BAA-138 / DSM 3043 / CIP 106854 / NCIMB 13768 / 1H11).